The following is a 635-amino-acid chain: Cell pattern formation-associated protein stuA (635 aa).

Disordered regions lie at residues 1–21 and 63–82; these read MNQTQPYMDVHSSHLSSAQPY and SGVASSQTAPPPPSTSMSSQ. In terms of domain architecture, HTH APSES-type spans 129 to 235; sequence RVTATLWEDE…HNIGGLLYHP (107 aa). A DNA-binding region (H-T-H motif) is located at residues 163–184; that stretch reads GTKLLNVAGMTRGRRDGILKSE. Disordered regions lie at residues 246-480 and 498-635; these read QESQ…ASRS and SQLT…PRRR. Low complexity-rich tracts occupy residues 276–294 and 312–325; these read MQTSIPSQMPQPPTMSSQP and SASSLMGLSNQSSS. A compositionally biased stretch (polar residues) spans 326–355; it reads YDWNNQGMNSGVPNTQPLSIDTTLSNTRSM. Low complexity predominate over residues 356–380; sequence PTTPATTPPGNNLQGMQSYQSQSGY. Basic and acidic residues predominate over residues 460-469; the sequence is APEHESEYVQ. Polar residues-rich tracts occupy residues 498–513 and 539–571; these read SQLTNDITGSPQQNGS and AASSLYNIVSDTRGSSNGAGSENYTVASNTAPT. Residues 582 to 605 are nuclear localization domain; sequence KRGREDDDMGRPDSQGDYESKRRR. Over residues 583-592 the composition is skewed to basic and acidic residues; sequence RGREDDDMGR.

This sequence belongs to the EFG1/PHD1/stuA family.

Functionally, transcription factor that regulates asexual reproduction. Binds the StuA-response elements (StRE) with the consensus sequence 5'-(A/T)CGCG(T/A)N(A/C)-3' at the promoters of target genes. Controls the expression of 6 secondary metabolite biosynthetic clusters including 2 involved in the synthesis of alkaloids (fumigaclavine and fumitremorgen), 2 clusters of the ETP class (gliotoxin and an unknown ETP-like toxin), a cluster predicted to produce pseurotin A, and the product of the last cluster is unknown. Controls the production of ergot alkaloids during conidiophore development. Controls expression of sspA and gliP. Involved in the induction of immunoglobulin E-independent mast cell degranulation. This Aspergillus fumigatus (strain ATCC MYA-4609 / CBS 101355 / FGSC A1100 / Af293) (Neosartorya fumigata) protein is Cell pattern formation-associated protein stuA.